The primary structure comprises 160 residues: MMPAKLQLDVLRTLQSSARHGTQTLKNSNFLERFHKDRIVFCLPFFPALFLVPVQKVLQHLCLRFTQVAPYFIIQLFDLPSRHAENLAPLLASCRIQYTNCFSSSSNGQVPSIISLYLRVDLSPFYAKKFQIPYRVPMIWLDVFQVFFVFLVISQHSLHS.

2 helical membrane passes run 39–59 (IVFCLPFFPALFLVPVQKVLQ) and 136–156 (VPMIWLDVFQVFFVFLVISQH).

The protein belongs to the UPF0479 family.

Its subcellular location is the membrane. This Saccharomyces cerevisiae (strain ATCC 204508 / S288c) (Baker's yeast) protein is UPF0479 membrane protein YLL066W-A.